Consider the following 1108-residue polypeptide: Serine/threonine-protein kinase AKL1 (1108 aa).

Position 2 is an N-acetylserine (serine 2). At serine 10 the chain carries Phosphoserine. Positions 35-319 (VEVVNYLAEG…IYQVLYHLCE (285 aa)) constitute a Protein kinase domain. ATP is bound by residues 41–49 (LAEGGFAQI) and lysine 70. Aspartate 181 serves as the catalytic Proton acceptor. The interval 405-466 (IPSQNVGQEL…QSPGIEDKSI (62 aa)) is disordered. A Phosphoserine modification is found at serine 407. The span at 419–435 (ESQSDQRKSTLSEDKSS) shows a compositional bias: basic and acidic residues. The segment covering 436–449 (RTTSNANSSGTANN) has biased composition (low complexity). Threonine 471 carries the post-translational modification Phosphothreonine. Residues 493 to 513 (KQSSDPTISEQSPRLNTQSLP) show a composition bias toward polar residues. Residues 493 to 534 (KQSSDPTISEQSPRLNTQSLPQRQKSTSSYSSGGRSMKSTSY) are disordered. Serine 504 carries the phosphoserine modification. Positions 514 to 534 (QRQKSTSSYSSGGRSMKSTSY) are enriched in low complexity. Phosphoserine occurs at positions 541 and 574. The segment covering 590–629 (QQQGQRYQQAQNQTGTQGNTFPDESQYQSRVEQQQQQQDQ) has biased composition (low complexity). 2 disordered regions span residues 590–663 (QQQG…GDSG) and 765–791 (EDMRNAQGGEPPILAGNSANEPMHSSS). Residues 781 to 791 (NSANEPMHSSS) show a composition bias toward polar residues. Serine 801 carries the post-translational modification Phosphoserine. Residues 807–838 (AGKQSFQDTNEPQTGGIEDAGGSGTIKGSNNN) form a disordered region. Residues 810-819 (QSFQDTNEPQ) show a composition bias toward polar residues. At serine 846 the chain carries Phosphoserine. The disordered stretch occupies residues 858–1108 (GAAVSSFSSS…SFFSVFRSEK (251 aa)). Positions 859–872 (AAVSSFSSSSSSAS) are enriched in low complexity. A compositionally biased stretch (basic and acidic residues) spans 910–934 (DDARRGKTAERRPLHNERGHKDQAR). Over residues 935 to 976 (SSDASKSNQFKSKDFSSVSTRQPRQSLDLNFQEVNLSSPTLT) the composition is skewed to polar residues. Serine 953 and serine 960 each carry phosphoserine. Basic and acidic residues predominate over residues 1006-1048 (ENKRHSTGHELSTRSNGKHETHRTGSKQRHDLERYRHSKDKDS). Residues lysine 1008 and lysine 1046 each participate in a glycyl lysine isopeptide (Lys-Gly) (interchain with G-Cter in ubiquitin) cross-link. Serine 1048 is modified (phosphoserine). The span at 1049–1060 (NSSITISTSTPS) shows a compositional bias: low complexity. The span at 1071 to 1082 (QSLDLERVRREA) shows a compositional bias: basic and acidic residues. Position 1072 is a phosphoserine (serine 1072).

The protein belongs to the protein kinase superfamily. Ser/Thr protein kinase family.

It carries out the reaction L-seryl-[protein] + ATP = O-phospho-L-seryl-[protein] + ADP + H(+). The catalysed reaction is L-threonyl-[protein] + ATP = O-phospho-L-threonyl-[protein] + ADP + H(+). Phosphorylates SCD5. In Saccharomyces cerevisiae (strain ATCC 204508 / S288c) (Baker's yeast), this protein is Serine/threonine-protein kinase AKL1 (AKL1).